A 312-amino-acid polypeptide reads, in one-letter code: G-protein coupled receptor BILF1 (312 aa).

Over 1 to 40 the chain is Extracellular; the sequence is MLSTMAPGSTVGTLVANMTSVNATEDACTKSYSAFLSGMT. 2 disulfide bridges follow: Cys28–Cys258 and Cys97–Cys174. The chain crosses the membrane as a helical span at residues 41 to 61; sequence SLLLVLLILLTLAGILFIIFV. The Cytoplasmic segment spans residues 62 to 67; it reads RKLVHR. Residues 68 to 88 form a helical membrane-spanning segment; that stretch reads MDVWLIALLIELLLWVLGKMI. Over 89–95 the chain is Extracellular; the sequence is QEFSSTG. Residues 96 to 116 traverse the membrane as a helical segment; the sequence is LCLLTQNMMFLGLMCSVWTHL. The Cytoplasmic portion of the chain corresponds to 117–138; sequence GMALEKTLALFSRTPKRTSHRN. Residues 139 to 159 traverse the membrane as a helical segment; the sequence is VCLYLMGVFCLVLLLIIILLI. Residues 160–192 are Extracellular-facing; it reads TMGPDANLNRGPNMCREGPTKGMHTAVQGLKAG. Residues 193 to 213 form a helical membrane-spanning segment; sequence CYLLAAVLIVLLTVIIIWKLL. The Cytoplasmic segment spans residues 214 to 228; the sequence is RTKFGRKPRLICNVT. The helical transmembrane segment at 229–249 threads the bilayer; sequence FTGLICAFSWFMLSLPLLFLG. The Extracellular portion of the chain corresponds to 250–269; it reads EAGSLGFDCTESLVARYYPG. Residues 270–290 form a helical membrane-spanning segment; that stretch reads PAACLALLLIILYAWSFSHFM. Topologically, residues 291–312 are cytoplasmic; it reads DSLKNQVTVTARYFRRVPSQST.

Belongs to the Epstein-Barr virus BILF1 protein family. As to quaternary structure, interacts with host CXCR4 to form higher-order heterooligomers. Interacts with host Gi heterotrimer.

The protein localises to the host cell membrane. It is found in the host mitochondrion outer membrane. Constitutively active, ligand-independent G protein-coupled receptor that has immunoevasive and oncogenic activities. Couples with the host inhibitory G protein (Gi) in order to disrupt the host chemokine signaling. As a consequence of its constitutive activity, mediates host CXCR4 inhibition. Enhances degradation of host major histocompatibility complex class I antigens via lysosomes, thereby modulating the antigen presentation to cytotoxic T cells. Targets selectively HLA-A, HLA-Band HLA-E molecules. Targets also newly synthesized MHC-I/peptide complexes en route to the host cell surface. Inhibits the host EIF2AK2/PKR phosphorylation. Displays tranforming activity. Utilizes its C-terminal tail to trigger host MAVS UFMylation via PARK2, resulting in selective MAVS removal from mitochondrial membranes and routing to lysosomes to prevent viral activation of the NLRP3 inflammasome. This is G-protein coupled receptor BILF1 from Homo sapiens (Human).